The chain runs to 620 residues: MALLQIAEPGQSPQPHQRRLAVGIDLGTTNSLVAALRSGRSEPLPDAQGNVILPSAVRYLANGVEVGLGAREAAPSDPLNSILSVKRLMGRGLADVKQLGEQLPYRFVGGESHMPFIDTVQGPKSPVEVSADILKVLRQRAEDTLGGELVGAVITVPAYFDDAQRQATKDAAKLAGLNVLRLLNEPTAAAVAYGLDQHAEGVVAIFDLGGGTFDISILRLTAGVFEVLATGGDTALGGDDFDHAIAGWIIEQAGLSADLDPATQRLLLQTACAAKEALTDSEAVSVQHGAWQGELTRGAFEAMIEPMIARSLKACRRAVRDSGIELEEVGAVVMVGGSTRVPRVREAVGSLFGRTPLTSIDPDQVVAIGAAIQADTLAGNRREGGELLLLDVIPLSLGLETMGGLMEKVIPRNTTIPVARAQEFTTYKDGQSAMMIHVLQGERELISDCRSLARFELRGIPAMVAGAAKIRVTFQVDADGLLSVAARELGSGVESSIQVKPSYGLTDGEIARMLKDSFEHAGADKHARQLREHQVDAERLLEAVQGALDADGERLLSDDEREAIAFQMQELRDLLTGTDGAAIEQQTKRLSQVTDAFAARRLDSTVKAALAGRNLNEIEE.

This sequence belongs to the heat shock protein 70 family.

Chaperone involved in the maturation of iron-sulfur cluster-containing proteins. Has a low intrinsic ATPase activity which is markedly stimulated by HscB. This chain is Chaperone protein HscA homolog, found in Pseudomonas entomophila (strain L48).